The primary structure comprises 543 residues: Glucose-6-phosphate isomerase (543 aa).

The active-site Proton donor is E353. Catalysis depends on residues H384 and K512.

This sequence belongs to the GPI family.

The protein resides in the cytoplasm. It carries out the reaction alpha-D-glucose 6-phosphate = beta-D-fructose 6-phosphate. It functions in the pathway carbohydrate biosynthesis; gluconeogenesis. Its pathway is carbohydrate degradation; glycolysis; D-glyceraldehyde 3-phosphate and glycerone phosphate from D-glucose: step 2/4. Functionally, catalyzes the reversible isomerization of glucose-6-phosphate to fructose-6-phosphate. In Christiangramia forsetii (strain DSM 17595 / CGMCC 1.15422 / KT0803) (Gramella forsetii), this protein is Glucose-6-phosphate isomerase.